A 436-amino-acid chain; its full sequence is ATP-dependent protease ATPase subunit HslU (436 aa).

Residues V18, 60 to 65 (GVGKTE), D249, E314, and R386 contribute to the ATP site.

It belongs to the ClpX chaperone family. HslU subfamily. In terms of assembly, a double ring-shaped homohexamer of HslV is capped on each side by a ring-shaped HslU homohexamer. The assembly of the HslU/HslV complex is dependent on binding of ATP.

Its subcellular location is the cytoplasm. Functionally, ATPase subunit of a proteasome-like degradation complex; this subunit has chaperone activity. The binding of ATP and its subsequent hydrolysis by HslU are essential for unfolding of protein substrates subsequently hydrolyzed by HslV. HslU recognizes the N-terminal part of its protein substrates and unfolds these before they are guided to HslV for hydrolysis. The sequence is that of ATP-dependent protease ATPase subunit HslU from Rhizobium rhizogenes (strain K84 / ATCC BAA-868) (Agrobacterium radiobacter).